Consider the following 210-residue polypeptide: Na(+)-translocating NADH-quinone reductase subunit D (210 aa).

Helical transmembrane passes span 42–62 (FVMTLAVTFVTALSNFSVSLI), 72–92 (IIVQMAIIASLVIVVDQVLKA), 103–123 (VFVGLIITNCIVMGRAEAFAM), 131–151 (LIDGIGNGLGYGFVLITVGFF), and 178–198 (NGLMLLAPSAFFLIGFLIWVI).

Belongs to the NqrDE/RnfAE family. As to quaternary structure, composed of six subunits; NqrA, NqrB, NqrC, NqrD, NqrE and NqrF.

It localises to the cell inner membrane. The catalysed reaction is a ubiquinone + n Na(+)(in) + NADH + H(+) = a ubiquinol + n Na(+)(out) + NAD(+). NQR complex catalyzes the reduction of ubiquinone-1 to ubiquinol by two successive reactions, coupled with the transport of Na(+) ions from the cytoplasm to the periplasm. NqrA to NqrE are probably involved in the second step, the conversion of ubisemiquinone to ubiquinol. This Vibrio campbellii (strain ATCC BAA-1116) protein is Na(+)-translocating NADH-quinone reductase subunit D.